We begin with the raw amino-acid sequence, 397 residues long: Tryptophan synthase beta chain 1 (397 aa).

Lys90 is modified (N6-(pyridoxal phosphate)lysine).

Belongs to the TrpB family. In terms of assembly, tetramer of two alpha and two beta chains. Requires pyridoxal 5'-phosphate as cofactor.

The catalysed reaction is (1S,2R)-1-C-(indol-3-yl)glycerol 3-phosphate + L-serine = D-glyceraldehyde 3-phosphate + L-tryptophan + H2O. It participates in amino-acid biosynthesis; L-tryptophan biosynthesis; L-tryptophan from chorismate: step 5/5. In terms of biological role, the beta subunit is responsible for the synthesis of L-tryptophan from indole and L-serine. The polypeptide is Tryptophan synthase beta chain 1 (trpB1) (Aquifex aeolicus (strain VF5)).